A 436-amino-acid chain; its full sequence is Ribosomal protein uS12 methylthiotransferase RimO (436 aa).

The MTTase N-terminal domain maps to 2 to 117 (KNVGIISLGC…IAEVIEKIEK (116 aa)). Positions 11, 47, 80, 154, 158, and 161 each coordinate [4Fe-4S] cluster. One can recognise a Radical SAM core domain in the interval 140 to 369 (TTPNYYAYLK…MEIQKEISYQ (230 aa)). The region spanning 372–436 (LSKVGKQLEV…AYEYDLVGEY (65 aa)) is the TRAM domain.

It belongs to the methylthiotransferase family. RimO subfamily. The cofactor is [4Fe-4S] cluster.

The protein resides in the cytoplasm. The catalysed reaction is L-aspartate(89)-[ribosomal protein uS12]-hydrogen + (sulfur carrier)-SH + AH2 + 2 S-adenosyl-L-methionine = 3-methylsulfanyl-L-aspartate(89)-[ribosomal protein uS12]-hydrogen + (sulfur carrier)-H + 5'-deoxyadenosine + L-methionine + A + S-adenosyl-L-homocysteine + 2 H(+). Its function is as follows. Catalyzes the methylthiolation of an aspartic acid residue of ribosomal protein uS12. The protein is Ribosomal protein uS12 methylthiotransferase RimO of Thermoanaerobacter sp. (strain X514).